An 821-amino-acid chain; its full sequence is MKVSQNWLKSLVEINTTAHDLSEKLSIGGFEVESLVDCSENVKGIVLGKVLSVVKHENSDKLSICIVDIGRSNPLQIVCGAKNVKQNIYVYVATVGTHLSAINLTIKKSEIRGVSSEGMICSLEELGIEDTSEGIAIIDEDIALNHNLGTSGAELLDLNDYIYDLAITANRPDGMSVVGIAREISALLETKLNFPGLKTRYKTNVYKNFNLCPEAISKNCLYSISNIESVNGKQLSPGWLKDRLDKSGIKSINLLVDITNYILLEQGQPLHAFDKDKLSNLIGRKVSYEDFSVRKANNNESLLCLNGENYKLNENITIIACDDKPVAIAGVIGGLETAVNEDTSSIYLEGAVFNPVIIRKSSKVIGIRTESSSRYEKGISYKNTLDSVTRAINILEEYFNITSPIINTSTELDLKKILIPLRRERIKKILGPIVIRNENYENNSKLEKRYLTDTEITEKLKLIGCTLNIKEYGWDVEIIPNRSQDLLREIDLIEEIARLIGYDMFDLNLPNPIKPGKLSSFQIALRKLKTGLIVNGFNEVLSYSLVPESKNNLIKISNPLLLETSCLRDNIWKEHINICNQNIKSGHEYCWIFEVGNIFHKKPDFSQEEILNGAIYGNNKFEQWLGSNKDNNMTYYEARGKLKEALSILNLNIEDKPTDTIDFLHPGRSSRLFTEGNEVGYFGEIHPNLISNKIALKKMYLFSLKINSILQASTRKNKWITVYKQFPTVPKMERDINFIFNKKYLVSEIISQIKKSGTKLLENVNLIDVYDDDSFGKEFISYTFRLSYRDSEKTLLDSDIGYLHDSVVEIIEKKFSTKLRD.

The tRNA-binding domain occupies 39–149 (SENVKGIVLG…EDIALNHNLG (111 aa)). In terms of domain architecture, B5 spans 414 to 507 (LKKILIPLRR…RLIGYDMFDL (94 aa)). Residues aspartate 485, aspartate 491, glutamate 494, and glutamate 495 each contribute to the Mg(2+) site. Positions 727–820 (PTVPKMERDI…IEKKFSTKLR (94 aa)) constitute an FDX-ACB domain.

Belongs to the phenylalanyl-tRNA synthetase beta subunit family. Type 1 subfamily. Tetramer of two alpha and two beta subunits. Requires Mg(2+) as cofactor.

Its subcellular location is the cytoplasm. It carries out the reaction tRNA(Phe) + L-phenylalanine + ATP = L-phenylalanyl-tRNA(Phe) + AMP + diphosphate + H(+). This is Phenylalanine--tRNA ligase beta subunit from Prochlorococcus marinus subsp. pastoris (strain CCMP1986 / NIES-2087 / MED4).